A 315-amino-acid chain; its full sequence is COMPASS component SWD3 (315 aa).

WD repeat units lie at residues 53 to 93, 94 to 133, 136 to 178, 187 to 228, 238 to 278, and 285 to 315; these read SHAR…HTFI, GHTA…LMKT, AHSE…KTLT, NGVV…RTFQ, HHSC…LLQL, and HHSS…WRWV.

As to quaternary structure, component of the Set1C/COMPASS complex which consists of SET1(2), BRE2(2), SPP1(2), SDC1(1), SHG1(1), SWD1(1), SWD2(1), and SWD3(1).

The protein resides in the nucleus. Its subcellular location is the chromosome. The protein localises to the telomere. Functionally, the COMPASS (Set1C) complex specifically mono-, di- and trimethylates histone H3 to form H3K4me1/2/3, which subsequently plays a role in telomere length maintenance and transcription elongation regulation. COMPASS recognizes ubiquitinated H2B on one face of the nucleosome which stimulates the methylation of H3 on the opposing face. SWD3/CPS30 establishes COMPASS trimethylation activity and may also serve as the anchor point to properly tether and space the other subunits. The chain is COMPASS component SWD3 from Saccharomyces cerevisiae (strain ATCC 204508 / S288c) (Baker's yeast).